Here is a 232-residue protein sequence, read N- to C-terminus: Polycomb group RING finger protein 5-B (232 aa).

Residues 18-57 form an RING-type zinc finger; it reads CFVCKGYLIKPTTVTECLHTFCKSCIVQHFEDSNDCPKCG. Basic and acidic residues predominate over residues 93–104; the sequence is QEDEFWRRKESN. Residues 93 to 128 are disordered; it reads QEDEFWRRKESNDENGPMCKKRRVDEEDDDKGDGDY.

As to quaternary structure, component of a PRC1-like complex.

It is found in the nucleus. Functionally, component of Polycomb group (PcG) multiprotein complexes; the complex class is required to maintain the transcriptionally repressive state of some genes. This Danio rerio (Zebrafish) protein is Polycomb group RING finger protein 5-B (pcgf5b).